Reading from the N-terminus, the 273-residue chain is ATP synthase subunit a (273 aa).

The next 5 helical transmembrane spans lie at 44–64 (WHIDSLLFSVGLGVLFLWLFY), 104–124 (IAPLALTIFIWVFLMNFMDLI), 149–169 (DLNVTLGLSLSVFVLIVFYSI), 223–243 (LIFILIALMPWWAQFALSVPW), and 244–264 (AIFHILIIVLQAFIFMMLTIV).

It belongs to the ATPase A chain family. F-type ATPases have 2 components, CF(1) - the catalytic core - and CF(0) - the membrane proton channel. CF(1) has five subunits: alpha(3), beta(3), gamma(1), delta(1), epsilon(1). CF(0) has three main subunits: a(1), b(2) and c(9-12). The alpha and beta chains form an alternating ring which encloses part of the gamma chain. CF(1) is attached to CF(0) by a central stalk formed by the gamma and epsilon chains, while a peripheral stalk is formed by the delta and b chains.

It is found in the cell inner membrane. Functionally, key component of the proton channel; it plays a direct role in the translocation of protons across the membrane. The sequence is that of ATP synthase subunit a from Shewanella putrefaciens (strain CN-32 / ATCC BAA-453).